We begin with the raw amino-acid sequence, 270 residues long: Urease accessory protein UreD (270 aa).

This sequence belongs to the UreD family. As to quaternary structure, ureD, UreF and UreG form a complex that acts as a GTP-hydrolysis-dependent molecular chaperone, activating the urease apoprotein by helping to assemble the nickel containing metallocenter of UreC. The UreE protein probably delivers the nickel.

Its subcellular location is the cytoplasm. Its function is as follows. Required for maturation of urease via the functional incorporation of the urease nickel metallocenter. In Beijerinckia indica subsp. indica (strain ATCC 9039 / DSM 1715 / NCIMB 8712), this protein is Urease accessory protein UreD.